The following is a 553-amino-acid chain: Chaperonin GroEL 1 (553 aa).

ATP-binding positions include 29–32 (TIGP), 86–90 (DGTTT), glycine 413, 476–478 (NAL), and aspartate 492. Residues 520-543 (DKPEPPAPAGGGGDPMGGMGGMDP) form a disordered region. Gly residues predominate over residues 528–543 (AGGGGDPMGGMGGMDP).

This sequence belongs to the chaperonin (HSP60) family. Forms a cylinder of 14 subunits composed of two heptameric rings stacked back-to-back. Interacts with the co-chaperonin GroES.

It localises to the cytoplasm. The enzyme catalyses ATP + H2O + a folded polypeptide = ADP + phosphate + an unfolded polypeptide.. Functionally, together with its co-chaperonin GroES, plays an essential role in assisting protein folding. The GroEL-GroES system forms a nano-cage that allows encapsulation of the non-native substrate proteins and provides a physical environment optimized to promote and accelerate protein folding. The polypeptide is Chaperonin GroEL 1 (Synechococcus sp. (strain CC9311)).